A 1097-amino-acid chain; its full sequence is Error-prone DNA polymerase (1097 aa).

The disordered stretch occupies residues 1039-1097; sequence PTGRGDEFAHGSPGGGDSRDRSPPKPRDIVVPLCRARHKGIDPEPETMPSAFPKPRDFR. The span at 1055–1066 shows a compositional bias: basic and acidic residues; that stretch reads DSRDRSPPKPRD.

Belongs to the DNA polymerase type-C family. DnaE2 subfamily.

The protein localises to the cytoplasm. The catalysed reaction is DNA(n) + a 2'-deoxyribonucleoside 5'-triphosphate = DNA(n+1) + diphosphate. DNA polymerase involved in damage-induced mutagenesis and translesion synthesis (TLS). It is not the major replicative DNA polymerase. The sequence is that of Error-prone DNA polymerase from Allorhizobium ampelinum (strain ATCC BAA-846 / DSM 112012 / S4) (Agrobacterium vitis (strain S4)).